Consider the following 314-residue polypeptide: uncharacterized protein (314 aa).

The N-terminal stretch at 1-20 (MKKRAGIWAALLLAAVMLAG) is a signal peptide. Cys-21 carries the N-palmitoyl cysteine lipid modification. Residue Cys-21 is the site of S-diacylglycerol cysteine attachment. In terms of domain architecture, Fe/B12 periplasmic-binding spans 59-311 (KIVSLMPSNT…ELAESIYPDT (253 aa)).

Belongs to the bacterial solute-binding protein 8 family. As to quaternary structure, the complex is composed of two ATP-binding proteins (YvrA), two transmembrane proteins (YvrB) and a solute-binding protein (YvrC).

It localises to the cell membrane. Probably part of an ABC transporter complex. This is an uncharacterized protein from Bacillus subtilis (strain 168).